Reading from the N-terminus, the 294-residue chain is tRNA pseudouridine synthase B (294 aa).

Residue Asp38 is the Nucleophile of the active site.

The protein belongs to the pseudouridine synthase TruB family. Type 1 subfamily.

The catalysed reaction is uridine(55) in tRNA = pseudouridine(55) in tRNA. Functionally, responsible for synthesis of pseudouridine from uracil-55 in the psi GC loop of transfer RNAs. The sequence is that of tRNA pseudouridine synthase B from Clostridium perfringens (strain 13 / Type A).